The chain runs to 410 residues: MGLLLPRGSYVFPVLASVSAATKRRAEWSYIKINITHSYSSNDKSSEFEEDNPTQKLSPEFQKAIAHGPSLSEFIKLSNNNQSTKEDFFSSPSSVNKSGKSLRLPEWLKTEIPCGGSVARLQKQLRSLNLHTVCEEARCPNISECWTAGKSTAATATIMIMGDTCTRGCRFCSVKTSPNPPPLDPDEPVNTAEAISKWDVDYIVITSVDRDDLGDGGARHIAKTIRQIKVRKPSIIVECLVPDFRGCTDSIHTVVRASPEVYAHNIETVESLQRVVRDHRAGYIQSLRSLETAKERSNRLVSSGDADFLVVTKSSIMLGLGEKEKEVMIALKDLRQAGVDCVTIGQYVQPTKRHLKVKEYIHPDKFDYWAKIGNDLGFLYTASGPLVRSSYRAGEYYIKHIIDQRKRKNI.

Cys134, Cys139, Cys145, Cys165, Cys169, Cys172, and Ser390 together coordinate [4Fe-4S] cluster. Residues 148–379 form the Radical SAM core domain; it reads AGKSTAATAT…AKIGNDLGFL (232 aa).

The protein belongs to the radical SAM superfamily. Lipoyl synthase family. Requires [4Fe-4S] cluster as cofactor.

Its subcellular location is the mitochondrion. It carries out the reaction [[Fe-S] cluster scaffold protein carrying a second [4Fe-4S](2+) cluster] + N(6)-octanoyl-L-lysyl-[protein] + 2 oxidized [2Fe-2S]-[ferredoxin] + 2 S-adenosyl-L-methionine + 4 H(+) = [[Fe-S] cluster scaffold protein] + N(6)-[(R)-dihydrolipoyl]-L-lysyl-[protein] + 4 Fe(3+) + 2 hydrogen sulfide + 2 5'-deoxyadenosine + 2 L-methionine + 2 reduced [2Fe-2S]-[ferredoxin]. Its pathway is protein modification; protein lipoylation via endogenous pathway; protein N(6)-(lipoyl)lysine from octanoyl-[acyl-carrier-protein]: step 2/2. Functionally, catalyzes the radical-mediated insertion of two sulfur atoms into the C-6 and C-8 positions of the octanoyl moiety bound to the lipoyl domains of lipoate-dependent enzymes, thereby converting the octanoylated domains into lipoylated derivatives. This chain is Lipoyl synthase, mitochondrial, found in Schistosoma mansoni (Blood fluke).